Consider the following 102-residue polypeptide: Large ribosomal subunit protein bL21 (102 aa).

The protein belongs to the bacterial ribosomal protein bL21 family. Part of the 50S ribosomal subunit. Contacts protein L20.

In terms of biological role, this protein binds to 23S rRNA in the presence of protein L20. The polypeptide is Large ribosomal subunit protein bL21 (Neisseria meningitidis serogroup A / serotype 4A (strain DSM 15465 / Z2491)).